The following is a 444-amino-acid chain: UDP-N-acetylmuramate--L-alanine ligase (444 aa).

ATP is bound at residue 110-116; it reads GAHGKTS.

Belongs to the MurCDEF family.

The protein resides in the cytoplasm. It catalyses the reaction UDP-N-acetyl-alpha-D-muramate + L-alanine + ATP = UDP-N-acetyl-alpha-D-muramoyl-L-alanine + ADP + phosphate + H(+). Its pathway is cell wall biogenesis; peptidoglycan biosynthesis. Its function is as follows. Cell wall formation. This chain is UDP-N-acetylmuramate--L-alanine ligase, found in Streptococcus pneumoniae (strain CGSP14).